Here is a 604-residue protein sequence, read N- to C-terminus: Elongation factor 4 (604 aa).

One can recognise a tr-type G domain in the interval 7 to 189 (SRLRNFCIIA…AVVDRIPPPA (183 aa)). GTP contacts are provided by residues 19-24 (DHGKST) and 136-139 (NKID).

This sequence belongs to the TRAFAC class translation factor GTPase superfamily. Classic translation factor GTPase family. LepA subfamily.

The protein resides in the cell inner membrane. It carries out the reaction GTP + H2O = GDP + phosphate + H(+). In terms of biological role, required for accurate and efficient protein synthesis under certain stress conditions. May act as a fidelity factor of the translation reaction, by catalyzing a one-codon backward translocation of tRNAs on improperly translocated ribosomes. Back-translocation proceeds from a post-translocation (POST) complex to a pre-translocation (PRE) complex, thus giving elongation factor G a second chance to translocate the tRNAs correctly. Binds to ribosomes in a GTP-dependent manner. In Prochlorococcus marinus (strain MIT 9303), this protein is Elongation factor 4.